The following is a 378-amino-acid chain: Mannitol-1-phosphate 5-dehydrogenase (378 aa).

4–15 is a binding site for NAD(+); it reads SVHFGAGNIGRG.

This sequence belongs to the mannitol dehydrogenase family.

It catalyses the reaction D-mannitol 1-phosphate + NAD(+) = beta-D-fructose 6-phosphate + NADH + H(+). The sequence is that of Mannitol-1-phosphate 5-dehydrogenase from Streptococcus pneumoniae (strain ATCC 700669 / Spain 23F-1).